Consider the following 293-residue polypeptide: Small ribosomal subunit protein uS2 (293 aa).

Residues 219–293 (IASAKPDEPY…WATPKTEDWA (75 aa)) form a disordered region.

This sequence belongs to the universal ribosomal protein uS2 family. Component of the small ribosomal subunit. Mature ribosomes consist of a small (40S) and a large (60S) subunit. The 40S subunit contains about 33 different proteins and 1 molecule of RNA (18S). The 60S subunit contains about 49 different proteins and 3 molecules of RNA (28S, 5.8S and 5S). Interacts with ribosomal protein S21.

It localises to the cytoplasm. In terms of biological role, required for the assembly and/or stability of the 40S ribosomal subunit. Required for the processing of the 20S rRNA-precursor to mature 18S rRNA in a late step of the maturation of 40S ribosomal subunits. The protein is Small ribosomal subunit protein uS2 of Hydra viridissima (Green hydra).